The following is a 24-amino-acid chain: Arginine attenuator peptide (24 aa).

It belongs to the arginine attenuator peptide family.

Arginine attenuator peptide (AAP) that has a regulatory role in the production of arginine-specific carbamoyl phosphate synthetase. Encoded by an upstream open reading frame (uORF) within the 5'-leader region of arginine-specific carbamoyl phosphate synthetase small chain (arg-2) mRNA, it attenuates the translation of the downstream arg-2 ORF. In the presence of high concentrations of arginine, ribosomes translating the uORF encoding AAP stall at the termination codon, resulting in reduced translation from the downstream arg-2 initiation codon. The sequence is that of Arginine attenuator peptide from Neurospora crassa (strain ATCC 24698 / 74-OR23-1A / CBS 708.71 / DSM 1257 / FGSC 987).